Consider the following 503-residue polypeptide: Catalase (503 aa).

An N-terminal signal peptide occupies residues 1-21; the sequence is MHMSKSFLIISMGFVAVSVQA. Residues His-72 and Asn-145 contribute to the active site. Tyr-353 is a binding site for heme.

This sequence belongs to the catalase family. Heme serves as cofactor.

It is found in the periplasm. It catalyses the reaction 2 H2O2 = O2 + 2 H2O. In terms of biological role, decomposes hydrogen peroxide into water and oxygen; serves to protect cells from the toxic effects of hydrogen peroxide. The protein is Catalase of Vibrio cholerae serotype O1 (strain ATCC 39315 / El Tor Inaba N16961).